Here is a 255-residue protein sequence, read N- to C-terminus: Small ribosomal subunit protein uS2 (255 aa).

The disordered stretch occupies residues 231 to 255; sequence RLQTGAEEEFSTEGEEVVEETPAEA. A compositionally biased stretch (acidic residues) spans 236 to 255; it reads AEEEFSTEGEEVVEETPAEA.

The protein belongs to the universal ribosomal protein uS2 family.

The protein is Small ribosomal subunit protein uS2 of Geobacter sp. (strain M21).